We begin with the raw amino-acid sequence, 791 residues long: Ribosome biogenesis protein ERB1 (791 aa).

A compositionally biased stretch (polar residues) spans methionine 1–glutamate 12. Disordered regions lie at residues methionine 1–aspartate 60 and alanine 68–glycine 87. Acidic residues-rich tracts occupy residues glutamate 25–aspartate 60 and glutamate 69–glycine 87. Residues arginine 254–serine 372 form a required for interaction with NOP7 region. Residues serine 372–threonine 408 form a required for interaction with YTM1 region. WD repeat units follow at residues glycine 424–glutamine 463, asparagine 472–glutamate 512, threonine 576–proline 618, lysine 621–lysine 659, proline 662–lysine 701, tyrosine 705–lysine 744, and valine 760–threonine 791.

Belongs to the WD repeat BOP1/ERB1 family. Component of the NOP7 complex, composed of ERB1, NOP7 and YTM1. The complex is held together by ERB1, which interacts with NOP7 via its N-terminal domain and with YTM1 via a high-affinity interaction between the seven-bladed beta-propeller domains of the 2 proteins. The NOP7 complex associates with the 66S pre-ribosome.

The protein resides in the nucleus. The protein localises to the nucleolus. It localises to the nucleoplasm. Functionally, component of the NOP7 complex, which is required for maturation of the 25S and 5.8S ribosomal RNAs and formation of the 60S ribosome. This Kluyveromyces lactis (strain ATCC 8585 / CBS 2359 / DSM 70799 / NBRC 1267 / NRRL Y-1140 / WM37) (Yeast) protein is Ribosome biogenesis protein ERB1.